A 376-amino-acid chain; its full sequence is Chaperone protein DnaJ (376 aa).

The 66-residue stretch at 5–70 folds into the J domain; it reads DYYEILGVER…QKRAAYDKFG (66 aa). The CR-type zinc-finger motif lies at 131-209; it reads GVSKEIKVPT…CHGDGRVQKT (79 aa). 8 residues coordinate Zn(2+): Cys144, Cys147, Cys161, Cys164, Cys183, Cys186, Cys197, and Cys200. CXXCXGXG motif repeat units lie at residues 144–151, 161–168, 183–190, and 197–204; these read CDECHGSG, CPTCHGSG, CPHCHGKG, and CRKCHGDG.

Belongs to the DnaJ family. As to quaternary structure, homodimer. The cofactor is Zn(2+).

It localises to the cytoplasm. Its function is as follows. Participates actively in the response to hyperosmotic and heat shock by preventing the aggregation of stress-denatured proteins and by disaggregating proteins, also in an autonomous, DnaK-independent fashion. Unfolded proteins bind initially to DnaJ; upon interaction with the DnaJ-bound protein, DnaK hydrolyzes its bound ATP, resulting in the formation of a stable complex. GrpE releases ADP from DnaK; ATP binding to DnaK triggers the release of the substrate protein, thus completing the reaction cycle. Several rounds of ATP-dependent interactions between DnaJ, DnaK and GrpE are required for fully efficient folding. Also involved, together with DnaK and GrpE, in the DNA replication of plasmids through activation of initiation proteins. The polypeptide is Chaperone protein DnaJ (Tolumonas auensis (strain DSM 9187 / NBRC 110442 / TA 4)).